Here is a 197-residue protein sequence, read N- to C-terminus: Shikimate kinase (197 aa).

14-19 (GSGKST) is an ATP binding site. Mg(2+) is bound at residue serine 18. Residues aspartate 36, arginine 60, and glycine 82 each contribute to the substrate site. ATP is bound at residue arginine 120. Residue arginine 147 coordinates substrate.

This sequence belongs to the shikimate kinase family. As to quaternary structure, monomer. Mg(2+) is required as a cofactor.

The protein resides in the cytoplasm. It carries out the reaction shikimate + ATP = 3-phosphoshikimate + ADP + H(+). Its pathway is metabolic intermediate biosynthesis; chorismate biosynthesis; chorismate from D-erythrose 4-phosphate and phosphoenolpyruvate: step 5/7. In terms of biological role, catalyzes the specific phosphorylation of the 3-hydroxyl group of shikimic acid using ATP as a cosubstrate. The polypeptide is Shikimate kinase (Prosthecochloris aestuarii (strain DSM 271 / SK 413)).